A 401-amino-acid chain; its full sequence is Probable tRNA sulfurtransferase (401 aa).

Residues 63–168 (TTAEQALSYL…EREAFLYGAR (106 aa)) form the THUMP domain. ATP is bound by residues 186 to 187 (LL), 211 to 212 (YF), R268, G290, and Q299.

Belongs to the ThiI family.

Its subcellular location is the cytoplasm. It catalyses the reaction [ThiI sulfur-carrier protein]-S-sulfanyl-L-cysteine + a uridine in tRNA + 2 reduced [2Fe-2S]-[ferredoxin] + ATP + H(+) = [ThiI sulfur-carrier protein]-L-cysteine + a 4-thiouridine in tRNA + 2 oxidized [2Fe-2S]-[ferredoxin] + AMP + diphosphate. The catalysed reaction is [ThiS sulfur-carrier protein]-C-terminal Gly-Gly-AMP + S-sulfanyl-L-cysteinyl-[cysteine desulfurase] + AH2 = [ThiS sulfur-carrier protein]-C-terminal-Gly-aminoethanethioate + L-cysteinyl-[cysteine desulfurase] + A + AMP + 2 H(+). Its pathway is cofactor biosynthesis; thiamine diphosphate biosynthesis. Catalyzes the ATP-dependent transfer of a sulfur to tRNA to produce 4-thiouridine in position 8 of tRNAs, which functions as a near-UV photosensor. Also catalyzes the transfer of sulfur to the sulfur carrier protein ThiS, forming ThiS-thiocarboxylate. This is a step in the synthesis of thiazole, in the thiamine biosynthesis pathway. The sulfur is donated as persulfide by IscS. In Treponema pallidum (strain Nichols), this protein is Probable tRNA sulfurtransferase.